Reading from the N-terminus, the 93-residue chain is Stage III sporulation protein D (93 aa).

One can recognise an HTH deoR-type domain in the interval 4–75 (YIKERTIKIG…IRHLRGGEAT (72 aa)). The segment at residues 21–40 (KTVRVIAKEFGVSKSTVHKD) is a DNA-binding region (H-T-H motif).

In terms of biological role, this protein regulates the transcription of sigK, which encodes mother cell chamber RNA polymerase sigma-factor (sigma K). In Bacillus subtilis (strain 168), this protein is Stage III sporulation protein D (spoIIID).